Consider the following 334-residue polypeptide: Methylthioribose-1-phosphate isomerase (334 aa).

Residues arginine 44–alanine 46, arginine 87, and glutamine 192 contribute to the substrate site. Catalysis depends on aspartate 233, which acts as the Proton donor. Asparagine 243–lysine 244 is a substrate binding site.

This sequence belongs to the eIF-2B alpha/beta/delta subunits family. MtnA subfamily.

It catalyses the reaction 5-(methylsulfanyl)-alpha-D-ribose 1-phosphate = 5-(methylsulfanyl)-D-ribulose 1-phosphate. Its pathway is amino-acid biosynthesis; L-methionine biosynthesis via salvage pathway; L-methionine from S-methyl-5-thio-alpha-D-ribose 1-phosphate: step 1/6. Its function is as follows. Catalyzes the interconversion of methylthioribose-1-phosphate (MTR-1-P) into methylthioribulose-1-phosphate (MTRu-1-P). The sequence is that of Methylthioribose-1-phosphate isomerase from Dehalococcoides mccartyi (strain ATCC BAA-2266 / KCTC 15142 / 195) (Dehalococcoides ethenogenes (strain 195)).